The sequence spans 425 residues: MPYVDRQNRICGFLDIEDNENSGKFLRRYFILDTQANCLLWYMDNPQNLAVGAGAVGSLQLTYISKVSIATPKQKPKTPFCFVINALSQRYFLQANDQKDLKDWVEALNQASKITVPKAGTVPLATEVLKNLTAPPTLEKKPQVAYKTEIIGGVVVQTPISQNGGDGQEGCEPGTHAFLRRSQSYIPTSGCRPSTGPPLIKSGYCVKQGNVRKSWKRRFFALDDFTICYFKCEQDREPLRTIPLKDVLKTHECLVKSGDLLMRDNLFEIITTSRTFYVQADSPEDMHSWIEGIGAAVQALKCHPREPSFSRSISLTRPGSSTLTSAPNSILSRRRPPAEEKRGLCKAPSVASSWQPWTPVPQAEEKPLSVEHAPEDSLFMPNPGESTATGVLASSRVRHRSEPQHPKEKPFVFNLDDENIRTSDV.

The PH 1 domain occupies 7–113; that stretch reads QNRICGFLDI…WVEALNQASK (107 aa). Residue K141 forms a Glycyl lysine isopeptide (Lys-Gly) (interchain with G-Cter in SUMO2) linkage. S184 carries the post-translational modification Phosphoserine. One can recognise a PH 2 domain in the interval 198-298; that stretch reads PLIKSGYCVK…WIEGIGAAVQ (101 aa). Over residues 310–331 the composition is skewed to polar residues; the sequence is SRSISLTRPGSSTLTSAPNSIL. Residues 310 to 425 are disordered; the sequence is SRSISLTRPG…DDENIRTSDV (116 aa). Phosphoserine occurs at positions 314 and 349. Composition is skewed to basic and acidic residues over residues 363-375 and 400-410; these read AEEK…HAPE and RSEPQHPKEKP.

Binds MPDZ and PTPN13.

The protein resides in the cytoplasm. It localises to the cell membrane. Its subcellular location is the nucleus. Its function is as follows. Binds specifically to phosphatidylinositol 3,4-diphosphate (PtdIns3,4P2), but not to other phosphoinositides. May recruit other proteins to the plasma membrane. This Mus musculus (Mouse) protein is Pleckstrin homology domain-containing family A member 2 (Plekha2).